A 400-amino-acid polypeptide reads, in one-letter code: Methylthioribose kinase (400 aa).

Residues asparagine 40, lysine 57, and 111-113 contribute to the ATP site; that span reads EDL. Aspartate 229 serves as a coordination point for substrate. Residue 246–248 coordinates ATP; that stretch reads DAE. Arginine 344 lines the substrate pocket.

The protein belongs to the methylthioribose kinase family. Homodimer.

It catalyses the reaction 5-(methylsulfanyl)-D-ribose + ATP = 5-(methylsulfanyl)-alpha-D-ribose 1-phosphate + ADP + H(+). It functions in the pathway amino-acid biosynthesis; L-methionine biosynthesis via salvage pathway; S-methyl-5-thio-alpha-D-ribose 1-phosphate from S-methyl-5'-thioadenosine (hydrolase route): step 2/2. Catalyzes the phosphorylation of methylthioribose into methylthioribose-1-phosphate. The sequence is that of Methylthioribose kinase from Pectobacterium carotovorum subsp. carotovorum (strain PC1).